A 249-amino-acid polypeptide reads, in one-letter code: Pyridoxine 5'-phosphate synthase (249 aa).

Asn-12 is a binding site for 3-amino-2-oxopropyl phosphate. 1-deoxy-D-xylulose 5-phosphate is bound at residue 14–15; it reads DH. Arg-23 lines the 3-amino-2-oxopropyl phosphate pocket. Catalysis depends on His-48, which acts as the Proton acceptor. Positions 50 and 55 each coordinate 1-deoxy-D-xylulose 5-phosphate. Glu-75 functions as the Proton acceptor in the catalytic mechanism. Position 105 (Thr-105) interacts with 1-deoxy-D-xylulose 5-phosphate. His-199 serves as the catalytic Proton donor. 3-amino-2-oxopropyl phosphate-binding positions include Gly-200 and 221 to 222; that span reads GH.

It belongs to the PNP synthase family. As to quaternary structure, homooctamer; tetramer of dimers.

Its subcellular location is the cytoplasm. The enzyme catalyses 3-amino-2-oxopropyl phosphate + 1-deoxy-D-xylulose 5-phosphate = pyridoxine 5'-phosphate + phosphate + 2 H2O + H(+). It functions in the pathway cofactor biosynthesis; pyridoxine 5'-phosphate biosynthesis; pyridoxine 5'-phosphate from D-erythrose 4-phosphate: step 5/5. Catalyzes the complicated ring closure reaction between the two acyclic compounds 1-deoxy-D-xylulose-5-phosphate (DXP) and 3-amino-2-oxopropyl phosphate (1-amino-acetone-3-phosphate or AAP) to form pyridoxine 5'-phosphate (PNP) and inorganic phosphate. The polypeptide is Pyridoxine 5'-phosphate synthase (Roseobacter denitrificans (strain ATCC 33942 / OCh 114) (Erythrobacter sp. (strain OCh 114))).